The primary structure comprises 441 residues: MQKQVKISGKSKENMSLLKHLKGDVQGKELVIEDSIVNERWKQVLKEKIDIEHDLFNYQKNREISKVPFLPVDRLITNDEVEDILNTLTEVLPTGKFTSGPYLEQFEKVLSTYLHKRYVIATSSGTDAIMIGLLALGLNPGDEVIMPANSFSATENAVLASGGVPIYVDINPQTFCIDPDKIEEAITPYTKFILPVHLYGKHSDMQHIRQIANRYKLKVIEDACQGIGLTDLGKYADITTLSFNPYKNFGVCGKAGAIATDNEELAKKCIQFSYHGFEVNVKNKKVINFGFNSKMDNLQAAIGLERMKYLSLNNFKRLFLADRYITQLAELQNKGYIELPELSEDHVWHLFPIKVRTEDRADIMTKLNEDFGVQTDVYYPILSHMQKTPLVQDKYAGLQLVHTEKAHSQVLHLPLYPSFTLEEQDRVMEGLFHVIKQEIGV.

Residue 98-99 coordinates substrate; that stretch reads TS. Position 125-126 (125-126) interacts with pyridoxal 5'-phosphate; that stretch reads GT. Phe-151 contacts substrate. Pyridoxal 5'-phosphate-binding residues include Gln-225 and Ser-242. 244-246 serves as a coordination point for substrate; it reads NPY. Position 247 is an N6-(pyridoxal phosphate)lysine (Lys-247). Tyr-274 and Lys-282 together coordinate substrate. Asn-292 contributes to the pyridoxal 5'-phosphate binding site. Tyr-379 contacts substrate.

Belongs to the DegT/DnrJ/EryC1 family. In terms of assembly, homodimer. Pyridoxal 5'-phosphate serves as cofactor.

The enzyme catalyses 3-dehydro-D-glucose 6-phosphate + L-glutamate = D-kanosamine 6-phosphate + 2-oxoglutarate. It participates in antibiotic biosynthesis; kanosamine biosynthesis. Involved in the biosynthesis of kanosamine (3-amino-3-deoxy-D-glucose), which is known to have antibiotic and antifungal properties, and to be a precursor of the antibiotic neotrehalosadiamine (3,3'-diamino-3,3'-dideoxy-alpha,beta-trehalose (NTD)). Catalyzes the reversible pyridoxal phosphate-dependent transamination of 3-dehydro-alpha-D-glucose 6-phosphate to form alpha-D-kanosamine-6-phosphate. It can only use alpha-anomer and glutamate is the only amino donor. This Bacillus subtilis (strain 168) protein is 3-oxo-glucose-6-phosphate:glutamate aminotransferase (ntdA).